The primary structure comprises 128 residues: Small ribosomal subunit protein uS13 (128 aa).

The disordered stretch occupies residues 97–128 (PVRGQRTRSNARTRKGPRPSRIKTKKKKEQTV). Residues 101–128 (QRTRSNARTRKGPRPSRIKTKKKKEQTV) are compositionally biased toward basic residues.

Belongs to the universal ribosomal protein uS13 family. Part of the 30S ribosomal subunit. Forms a loose heterodimer with protein S19. Forms two bridges to the 50S subunit in the 70S ribosome.

In terms of biological role, located at the top of the head of the 30S subunit, it contacts several helices of the 16S rRNA. In the 70S ribosome it contacts the 23S rRNA (bridge B1a) and protein L5 of the 50S subunit (bridge B1b), connecting the 2 subunits; these bridges are implicated in subunit movement. Contacts the tRNAs in the A and P-sites. In Pseudothermotoga lettingae (strain ATCC BAA-301 / DSM 14385 / NBRC 107922 / TMO) (Thermotoga lettingae), this protein is Small ribosomal subunit protein uS13.